The primary structure comprises 299 residues: Glutamate formimidoyltransferase (299 aa).

H82 acts as the For formimidoyltransferase activity in catalysis. G163–G172 provides a ligand contact to folate.

This sequence belongs to the formiminotransferase family.

It is found in the cytoplasm. It catalyses the reaction (6S)-5-formyl-5,6,7,8-tetrahydrofolate + L-glutamate = N-formyl-L-glutamate + (6S)-5,6,7,8-tetrahydrofolate + H(+). It carries out the reaction 5-formimidoyltetrahydrofolate + L-glutamate = N-formimidoyl-L-glutamate + (6S)-5,6,7,8-tetrahydrofolate. The catalysed reaction is (6S)-5-formyl-5,6,7,8-tetrahydrofolate + ATP = (6R)-5,10-methenyltetrahydrofolate + ADP + phosphate. The protein operates within amino-acid degradation; L-histidine degradation into L-glutamate; L-glutamate from N-formimidoyl-L-glutamate (transferase route): step 1/1. It participates in one-carbon metabolism; tetrahydrofolate interconversion. Functionally, catalyzes the transfer of the formyl group from N-formylglutamate to tetrahydrofolate (THF) to yield 5-formyltetrahydrofolate (5-CHO-THF) and glutamate (Glu). The triglutamate form of 5-CHO-THF (5-CHO-THF-Glu3) can also be used as substrate. It can also catalyze the transfer of the formimino group from N-formiminoglutamate to tetrahydrofolate (THF) to yield 5-formiminotetrahydrofolate (5-NH=CH-THF) and glutamate (Glu). It can replace YgfA to catalyze the irreversible ATP-dependent transformation of 5-CHO-THF to form 5,10-methenyltetrahydrofolate (5,10-CH=THF). This Streptococcus pyogenes serotype M1 protein is Glutamate formimidoyltransferase.